The sequence spans 302 residues: ATP synthase gamma chain (302 aa).

Belongs to the ATPase gamma chain family. In terms of assembly, F-type ATPases have 2 components, CF(1) - the catalytic core - and CF(0) - the membrane proton channel. CF(1) has five subunits: alpha(3), beta(3), gamma(1), delta(1), epsilon(1). CF(0) has three main subunits: a, b and c.

It is found in the cell membrane. Functionally, produces ATP from ADP in the presence of a proton gradient across the membrane. The gamma chain is believed to be important in regulating ATPase activity and the flow of protons through the CF(0) complex. The protein is ATP synthase gamma chain of Kineococcus radiotolerans (strain ATCC BAA-149 / DSM 14245 / SRS30216).